We begin with the raw amino-acid sequence, 586 residues long: Lipoprotein LpqB (586 aa).

Positions 1-17 are cleaved as a signal peptide; that stretch reads MVRSVFALVFAAVLLGG. Cys-18 is lipidated: N-palmitoyl cysteine. Residue Cys-18 is the site of S-diacylglycerol cysteine attachment. A disordered region spans residues 26–45; that stretch reads APQAIGTVERPAPSNLPKPI.

The protein belongs to the LpqB lipoprotein family.

It is found in the cell membrane. The protein is Lipoprotein LpqB of Mycobacterium ulcerans (strain Agy99).